The chain runs to 688 residues: Glycine--tRNA ligase beta subunit (688 aa).

Belongs to the class-II aminoacyl-tRNA synthetase family. As to quaternary structure, tetramer of two alpha and two beta subunits.

Its subcellular location is the cytoplasm. It catalyses the reaction tRNA(Gly) + glycine + ATP = glycyl-tRNA(Gly) + AMP + diphosphate. This chain is Glycine--tRNA ligase beta subunit, found in Histophilus somni (strain 129Pt) (Haemophilus somnus).